The primary structure comprises 102 residues: MSDQATTLRIKPLGDRILVKREEEDSTARGGIILPDTAKKKQDRAEVLVLGTGKRDKDGNVLPFEVTVGDTVLIDKYAGQELTVDGEEYVIVQESEVMAVLK.

This sequence belongs to the GroES chaperonin family. As to quaternary structure, heptamer of 7 subunits arranged in a ring. Interacts with the chaperonin GroEL.

The protein localises to the cytoplasm. Its function is as follows. Together with the chaperonin GroEL, plays an essential role in assisting protein folding. The GroEL-GroES system forms a nano-cage that allows encapsulation of the non-native substrate proteins and provides a physical environment optimized to promote and accelerate protein folding. GroES binds to the apical surface of the GroEL ring, thereby capping the opening of the GroEL channel. The sequence is that of Co-chaperonin GroES from Chlamydia caviae (strain ATCC VR-813 / DSM 19441 / 03DC25 / GPIC) (Chlamydophila caviae).